The following is a 406-amino-acid chain: MSQPITRENFDEWMIPVYAPAPFIPVRGEGSRLWDQQGKEYIDFAGGIAVNALGHAHPELREALNEQASKFWHTGNGYTNEPVLRLAKKLIDATFADRVFFCNSGAEANEAALKLARKFAHDRYGCHKSGIVAFKNAFHGRTLFTVSAGGQPAYSQDFAPLPPDIRHAAYNDINSASALIDDSTCAVIVEPIQGEGGVVPASNAFLHGLRELCDRHNALLIFDEVQTGVGRTGELYAYMHYGVTPDLLTTAKALGGGFPVGALLATEECASVMTVGTHGTTYGGNPLASAVAGKVLDLINTPEMLNGVKQRHDWFVERLNTVNHRCGLFSEIRGLGLLIGCVLNADYAGQAKQISQEAAKAGVMVLIAGGNVVRFAPALNVSEEEVTTGLDRFAAACEHFVSRGSS.

N6-(pyridoxal phosphate)lysine is present on Lys-252.

This sequence belongs to the class-III pyridoxal-phosphate-dependent aminotransferase family. AstC subfamily. The cofactor is pyridoxal 5'-phosphate.

It carries out the reaction N(2)-succinyl-L-ornithine + 2-oxoglutarate = N-succinyl-L-glutamate 5-semialdehyde + L-glutamate. It functions in the pathway amino-acid degradation; L-arginine degradation via AST pathway; L-glutamate and succinate from L-arginine: step 3/5. Catalyzes the transamination of N(2)-succinylornithine and alpha-ketoglutarate into N(2)-succinylglutamate semialdehyde and glutamate. Can also act as an acetylornithine aminotransferase. This is Succinylornithine transaminase from Escherichia coli O7:K1 (strain IAI39 / ExPEC).